Reading from the N-terminus, the 74-residue chain is Translation initiation factor IF-1 (74 aa).

The region spanning 1–72 (MGKEDVIRME…TRGRIVYRKK (72 aa)) is the S1-like domain.

Belongs to the IF-1 family. Component of the 30S ribosomal translation pre-initiation complex which assembles on the 30S ribosome in the order IF-2 and IF-3, IF-1 and N-formylmethionyl-tRNA(fMet); mRNA recruitment can occur at any time during PIC assembly.

The protein resides in the cytoplasm. Its function is as follows. One of the essential components for the initiation of protein synthesis. Stabilizes the binding of IF-2 and IF-3 on the 30S subunit to which N-formylmethionyl-tRNA(fMet) subsequently binds. Helps modulate mRNA selection, yielding the 30S pre-initiation complex (PIC). Upon addition of the 50S ribosomal subunit IF-1, IF-2 and IF-3 are released leaving the mature 70S translation initiation complex. The protein is Translation initiation factor IF-1 of Thermotoga maritima (strain ATCC 43589 / DSM 3109 / JCM 10099 / NBRC 100826 / MSB8).